A 343-amino-acid polypeptide reads, in one-letter code: GTPase Obg (343 aa).

The Obg domain maps to 1–159; sequence MKFLDQAKVY…LNIWLRLKLI (159 aa). In terms of domain architecture, OBG-type G spans 160-327; the sequence is ADAGLVGLPN…VLRALMTVIA (168 aa). Residues 166–173, 191–195, 212–215, 279–282, and 308–310 contribute to the GTP site; these read GLPNAGKS, FTTLH, DIPG, SQVD, and SAV. Ser173 and Thr193 together coordinate Mg(2+).

It belongs to the TRAFAC class OBG-HflX-like GTPase superfamily. OBG GTPase family. Monomer. It depends on Mg(2+) as a cofactor.

It is found in the cytoplasm. An essential GTPase which binds GTP, GDP and possibly (p)ppGpp with moderate affinity, with high nucleotide exchange rates and a fairly low GTP hydrolysis rate. Plays a role in control of the cell cycle, stress response, ribosome biogenesis and in those bacteria that undergo differentiation, in morphogenesis control. In Mesorhizobium japonicum (strain LMG 29417 / CECT 9101 / MAFF 303099) (Mesorhizobium loti (strain MAFF 303099)), this protein is GTPase Obg.